A 299-amino-acid chain; its full sequence is Acetylglutamate kinase (299 aa).

Substrate-binding positions include 64–65 (GG), Arg86, and Asn197.

The protein belongs to the acetylglutamate kinase family. ArgB subfamily.

It localises to the cytoplasm. It catalyses the reaction N-acetyl-L-glutamate + ATP = N-acetyl-L-glutamyl 5-phosphate + ADP. It participates in amino-acid biosynthesis; L-arginine biosynthesis; N(2)-acetyl-L-ornithine from L-glutamate: step 2/4. Functionally, catalyzes the ATP-dependent phosphorylation of N-acetyl-L-glutamate. This Sulfurihydrogenibium sp. (strain YO3AOP1) protein is Acetylglutamate kinase.